Consider the following 195-residue polypeptide: Probable molybdenum cofactor guanylyltransferase (195 aa).

GTP is bound by residues 6–8 (LAG), Lys-18, Asp-67, and Asp-93. A Mg(2+)-binding site is contributed by Asp-93.

It belongs to the MobA family. Requires Mg(2+) as cofactor.

It is found in the cytoplasm. It catalyses the reaction Mo-molybdopterin + GTP + H(+) = Mo-molybdopterin guanine dinucleotide + diphosphate. Its function is as follows. Transfers a GMP moiety from GTP to Mo-molybdopterin (Mo-MPT) cofactor (Moco or molybdenum cofactor) to form Mo-molybdopterin guanine dinucleotide (Mo-MGD) cofactor. In Thermococcus sibiricus (strain DSM 12597 / MM 739), this protein is Probable molybdenum cofactor guanylyltransferase.